The primary structure comprises 328 residues: DNA-directed RNA polymerase subunit alpha (328 aa).

The alpha N-terminal domain (alpha-NTD) stretch occupies residues 1–234 (MQGSVTEFLK…EQLDAFVDLR (234 aa)). The alpha C-terminal domain (alpha-CTD) stretch occupies residues 248–328 (FXPILLRPVD…NWPPASIAED (81 aa)).

Belongs to the RNA polymerase alpha chain family. Homodimer. The RNAP catalytic core consists of 2 alpha, 1 beta, 1 beta' and 1 omega subunit. When a sigma factor is associated with the core the holoenzyme is formed, which can initiate transcription.

The catalysed reaction is RNA(n) + a ribonucleoside 5'-triphosphate = RNA(n+1) + diphosphate. In terms of biological role, DNA-dependent RNA polymerase catalyzes the transcription of DNA into RNA using the four ribonucleoside triphosphates as substrates. The polypeptide is DNA-directed RNA polymerase subunit alpha (Haemophilus influenzae (strain ATCC 51907 / DSM 11121 / KW20 / Rd)).